A 530-amino-acid chain; its full sequence is Chaperone Ric-8A (530 aa).

Serine 435 bears the Phosphoserine mark. Phosphothreonine occurs at positions 440 and 442. Phosphoserine is present on residues serine 501, serine 522, serine 523, and serine 527.

Belongs to the synembryn family. Interacts with GDP-bound G alpha proteins GNAI1, GNAO1 and GNAQ, and with GNA13 with lower affinity. Does not interact with G-alpha proteins when they are in complex with subunits beta and gamma. Interacts (via C-terminus) with RGS14; the interaction stimulates the dissociation of the complex between RGS14 and the active GTP-bound form of GNAI1. Interacts with NCS1; interaction is favored in the absence of Ca(2+) and myristoylation of NCS1 is not required. Phosphorylated at Ser-435 and Thr-440 by CK2, stabilizing its interface with G alpha proteins.

It is found in the cytoplasm. The protein resides in the cell cortex. Chaperone that specifically binds and folds nascent G alpha proteins prior to G protein heterotrimer formation, promoting their stability and activity: folds GNAI1, GNAO1, GNA13 and GNAQ. Does not fold G(s) G-alpha proteins GNAS nor GNAL. Also acts as a guanine nucleotide exchange factor (GEF) for G alpha proteins by stimulating exchange of bound GDP for free GTP. Involved in regulation of microtubule pulling forces during mitotic movement of chromosomes by stimulating G(i)-alpha protein (GNAI1), possibly leading to release G(i)-alpha-GTP and NuMA proteins from the NuMA-GPSM2-G(i)-alpha-GDP complex. Also acts as an activator for G(q)-alpha (GNAQ) protein by enhancing the G(q)-coupled receptor-mediated ERK activation. In Macaca fascicularis (Crab-eating macaque), this protein is Chaperone Ric-8A (RIC8A).